A 258-amino-acid polypeptide reads, in one-letter code: Aspartate/glutamate leucyltransferase (258 aa).

This sequence belongs to the R-transferase family. Bpt subfamily.

Its subcellular location is the cytoplasm. The catalysed reaction is N-terminal L-glutamyl-[protein] + L-leucyl-tRNA(Leu) = N-terminal L-leucyl-L-glutamyl-[protein] + tRNA(Leu) + H(+). It carries out the reaction N-terminal L-aspartyl-[protein] + L-leucyl-tRNA(Leu) = N-terminal L-leucyl-L-aspartyl-[protein] + tRNA(Leu) + H(+). Its function is as follows. Functions in the N-end rule pathway of protein degradation where it conjugates Leu from its aminoacyl-tRNA to the N-termini of proteins containing an N-terminal aspartate or glutamate. This Rhizobium leguminosarum bv. trifolii (strain WSM2304) protein is Aspartate/glutamate leucyltransferase.